We begin with the raw amino-acid sequence, 110 residues long: Insulin (110 aa).

Positions 1-24 (MASLAALLPLLALLVLCRLDPAQA) are cleaved as a signal peptide. 3 disulfide bridges follow: Cys31–Cys96, Cys43–Cys109, and Cys95–Cys100. The propeptide at 57 to 87 (EVEELQVGQAELGGGPGAGGLQPSALELALQ) is c peptide.

The protein belongs to the insulin family. In terms of assembly, heterodimer of a B chain and an A chain linked by two disulfide bonds.

It is found in the secreted. Its function is as follows. Insulin decreases blood glucose concentration. It increases cell permeability to monosaccharides, amino acids and fatty acids. It accelerates glycolysis, the pentose phosphate cycle, and glycogen synthesis in liver. In Oryctolagus cuniculus (Rabbit), this protein is Insulin (INS).